A 488-amino-acid polypeptide reads, in one-letter code: G-patch domain and KOW motifs-containing protein (488 aa).

Residues 1-11 (MAGRESPPPSA) are compositionally biased toward pro residues. A disordered region spans residues 1 to 20 (MAGRESPPPSAPSMAPISFG). Residue Ala-2 is modified to N-acetylalanine. A Phosphoserine; by PKA modification is found at Ser-25. Residues 72–97 (IQNGSRRQPLSKNPKPSSETSTVLMS) are disordered. Residues 73–95 (QNGSRRQPLSKNPKPSSETSTVL) show a composition bias toward polar residues. Ser-115 is subject to Phosphoserine. The G-patch domain maps to 164–210 (VEAYGLAMLRGMGWKPGKGIGNTFSQVVKPRVNSIRPKGLGLGANRM). 2 disordered regions span residues 216–241 (ASVGSHHPPRPDGDRENDKEGQPQGL) and 295–367 (QEFD…PRNK). A compositionally biased stretch (basic and acidic residues) spans 224 to 236 (PRPDGDRENDKEG). In terms of domain architecture, KOW 1 spans 231 to 258 (ENDKEGQPQGLMHGRAVVVLSGPYRGLY). A compositionally biased stretch (polar residues) spans 307–331 (VSQTSTEQQNRATGTASSLKAAQNQ). Composition is skewed to basic and acidic residues over residues 332–341 (EDSKRRQKGS) and 349–363 (PDRQDGPVPKTEKAA). One can recognise a KOW 2 domain in the interval 401–428 (PDTCVCRTDEGRVLEDVREDMLETLIPK). Ser-485 bears the Phosphoserine mark.

This sequence belongs to the MOS2 family. As to quaternary structure, component of the minor spliceosome, which splices U12-type introns. Interacts with PRKX, PRKACB and DHX16. Post-translationally, phosphorylation regulates its ability to bind RNA.

The protein resides in the nucleus. RNA-binding protein involved in pre-mRNA splicing. As a component of the minor spliceosome, involved in the splicing of U12-type introns in pre-mRNAs. This is G-patch domain and KOW motifs-containing protein (Gpkow) from Mus musculus (Mouse).